Here is a 1017-residue protein sequence, read N- to C-terminus: Voltage-gated delayed rectifier potassium channel KCNH4 (1017 aa).

The Cytoplasmic segment spans residues Met-1–Gly-232. In terms of domain architecture, PAS spans Phe-14–His-90. In terms of domain architecture, PAC spans His-93–Gly-145. Residues Pro-139 to Arg-170 are disordered. The helical transmembrane segment at Leu-233–Gly-253 threads the bilayer. Residues Asp-254–Arg-262 are Extracellular-facing. Residues His-263–Phe-283 form a helical membrane-spanning segment. Residues Arg-284–Tyr-305 lie on the Cytoplasmic side of the membrane. Residues Leu-306–Phe-326 form a helical membrane-spanning segment. Over Asn-327–Val-334 the chain is Extracellular. The helical; Voltage-sensor transmembrane segment at His-335–Tyr-355 threads the bilayer. Residues Ser-356–Thr-364 are Cytoplasmic-facing. The chain crosses the membrane as a helical span at residues Leu-365–Gly-385. At Arg-386–Tyr-427 the chain is on the extracellular side. Asn-415 is a glycosylation site (N-linked (GlcNAc...) asparagine). An intramembrane region (pore-forming) is located at residues Ile-428–Ala-448. Residues Ser-440 to Asn-445 carry the Selectivity filter motif. Residues Asn-449–Lys-454 are Extracellular-facing. A helical transmembrane segment spans residues Ile-455–Val-475. Topologically, residues Thr-476–His-1017 are cytoplasmic. The interval Leu-557–Gly-621 is cNMP-binding domain. Disordered stretches follow at residues Gly-690–Ser-749 and Leu-771–Thr-870. Over residues Pro-703–Glu-726 the composition is skewed to polar residues. 2 stretches are compositionally biased toward low complexity: residues Leu-771 to Ala-786 and Pro-806 to Pro-820. Positions Ala-873 to Leu-907 form a coiled coil. The segment at Ser-972–His-1017 is disordered. Pro residues predominate over residues Pro-980–Glu-996. Polar residues predominate over residues Ser-1008 to His-1017.

The protein belongs to the potassium channel family. H (Eag) (TC 1.A.1.20) subfamily. Kv12.3/KCNH4 sub-subfamily. In terms of assembly, the potassium channel is probably composed of a homo- or heterotetrameric complex of pore-forming alpha subunits that can associate with modulating beta subunits. In terms of tissue distribution, highly expressed in adult testis, and in adult and embryonic brain. In adult brain found in piriform cortex, olfactory tubercle, cerebral cortex, hippocampus pyramidial cells and dentate gyrus and basal ganglia of caudate/putamen and accumbens nucleus. Detected at intermediate levels in lung, spinal cord, and pituitary.

The protein resides in the membrane. It catalyses the reaction K(+)(in) = K(+)(out). Pore-forming (alpha) subunit of a voltage-gated delayed rectifier. Activates at more negative voltages, exhibits fast prepulse-independent activation kinetics and deactivates much more slowly, but shows no inactivation. The sequence is that of Voltage-gated delayed rectifier potassium channel KCNH4 from Rattus norvegicus (Rat).